The sequence spans 302 residues: MAANYWASTQRRHWLFTRERLAEIREAFRERHKLAHSQFPLPDQRLLNIYFSQQLIKLGKRMSTRQQALATAQVYIKRFYTKNEIRHTNPYLVLTTAFYLACKMEECPQHIRFVVGEARSLWPEFITPDVSKLGECEFSLISEMNSQLIVHHPYRTLSGLQSELSLTSDEVALAWSVINDHYLTDLPLLYSPHVIAVMAVMVAVVFKPGPGNFHGSAAPVLAGAMRDGGMNMLAALGDKSGNEPPPKVQKLINWLAESEVDIKAVIECTQELVSLYEVWEQYSEKNCKELLGRMVKTKHLDK.

Residues 53–142 (QQLIKLGKRM…LGECEFSLIS (90 aa)) enclose the Cyclin N-terminal domain.

The protein belongs to the cyclin family. Cyclin C subfamily. Component of the srb8-11 complex, a regulatory module of the Mediator complex.

Its subcellular location is the nucleus. Component of the srb8-11 complex. The srb8-11 complex is a regulatory module of the Mediator complex which is itself involved in regulation of basal and activated RNA polymerase II-dependent transcription. The srb8-11 complex may be involved in the transcriptional repression of a subset of genes regulated by Mediator. It may inhibit the association of the Mediator complex with RNA polymerase II to form the holoenzyme complex. The srb8-11 complex phosphorylates the C-terminal domain (CTD) of the largest subunit of RNA polymerase II. The sequence is that of RNA polymerase II holoenzyme cyclin-like subunit (ssn8) from Aspergillus clavatus (strain ATCC 1007 / CBS 513.65 / DSM 816 / NCTC 3887 / NRRL 1 / QM 1276 / 107).